An 88-amino-acid chain; its full sequence is Beta-insect excitatory toxin 1 (88 aa).

Positions 1-18 (MKFLLLFLVVLPIMGVFG) are cleaved as a signal peptide. The region spanning 20 to 83 (KNGYAVDSSG…ISDTRKSYCD (64 aa)) is the LCN-type CS-alpha/beta domain. 4 cysteine pairs are disulfide-bonded: C34-C55, C40-C60, C44-C62, and C56-C82.

Belongs to the long (4 C-C) scorpion toxin superfamily. Sodium channel inhibitor family. Beta subfamily. In terms of tissue distribution, expressed by the venom gland.

The protein resides in the secreted. Its function is as follows. Excitatory insect beta-toxins induce a spastic paralysis. They bind voltage-independently at site-4 of sodium channels (Nav) and shift the voltage of activation toward more negative potentials thereby affecting sodium channel activation and promoting spontaneous and repetitive firing. This toxin is active only on insects. The sequence is that of Beta-insect excitatory toxin 1 from Androctonus australis (Sahara scorpion).